The chain runs to 709 residues: Elongation factor G (709 aa).

The region spanning 6-295 (KFLRNIGIMA…AVCTYLPSPL (290 aa)) is the tr-type G domain. GTP contacts are provided by residues 15-22 (AHIDAGKT), 92-96 (DTPGH), and 146-149 (NKMD).

Belongs to the TRAFAC class translation factor GTPase superfamily. Classic translation factor GTPase family. EF-G/EF-2 subfamily.

The protein localises to the cytoplasm. In terms of biological role, catalyzes the GTP-dependent ribosomal translocation step during translation elongation. During this step, the ribosome changes from the pre-translocational (PRE) to the post-translocational (POST) state as the newly formed A-site-bound peptidyl-tRNA and P-site-bound deacylated tRNA move to the P and E sites, respectively. Catalyzes the coordinated movement of the two tRNA molecules, the mRNA and conformational changes in the ribosome. This chain is Elongation factor G, found in Amoebophilus asiaticus (strain 5a2).